Consider the following 96-residue polypeptide: Integration host factor subunit beta (96 aa).

Belongs to the bacterial histone-like protein family. As to quaternary structure, heterodimer of an alpha and a beta chain.

Its function is as follows. This protein is one of the two subunits of integration host factor, a specific DNA-binding protein that functions in genetic recombination as well as in transcriptional and translational control. This is Integration host factor subunit beta from Caulobacter vibrioides (strain ATCC 19089 / CIP 103742 / CB 15) (Caulobacter crescentus).